Consider the following 489-residue polypeptide: MKYKSIGNVETKYYQIPEELVLESGKKISDVTLAYETYGTLNWDKSNAILVCHALTGDAHAAGWHEGDRKPGWWDIIIGPGKALDTRKYFIICSNVIGGCKGSTGPSSINPDTGESYGLDFPVVTIKDMVNAQKKLIDYLGISKLLAVIGGSMGGLQVLQWSVSYPDMVKKAIPIATAGYSTPQQIAFNEVGRIAIVSDPNWNSGNYYGEKEPTHGLALARMIGHITYLSDDSMHQKFGRRLQDKNEYEFDFSREFEVESYLHYQGLTFTERFDANSYLYLTKAIDYFDLTENNSLAEGLKNVEAKFLVISFTSDWLYPPYQLREIVMALSANNADVTYREIESNYGHDSFLLESGQLNYVLNNFLSHTYVSDIMIEDIATIKEGISIDEAARVMFEKEITHLPLVSSDSKLVGLVTSWDISKSIALKSDNLEEIMTKNVVTARPDEPIEKAAEKMESKDISALPVIDKDRRVIGMVTSEDISRLIEEF.

The 308-residue stretch at 47 to 354 folds into the AB hydrolase-1 domain; sequence NAILVCHALT…NYGHDSFLLE (308 aa). The Nucleophile role is filled by Ser152. Residue Arg221 coordinates substrate. Residues Asp315 and His348 contribute to the active site. Asp349 is a binding site for substrate. CBS domains are found at residues 375–434 and 436–489; these read MIED…NLEE and MTKN…IEEF.

The protein belongs to the AB hydrolase superfamily. MetX family. As to quaternary structure, homodimer.

Its subcellular location is the cytoplasm. It catalyses the reaction L-homoserine + acetyl-CoA = O-acetyl-L-homoserine + CoA. Its pathway is amino-acid biosynthesis; L-methionine biosynthesis via de novo pathway; O-acetyl-L-homoserine from L-homoserine: step 1/1. Its function is as follows. Transfers an acetyl group from acetyl-CoA to L-homoserine, forming acetyl-L-homoserine. The sequence is that of Homoserine O-acetyltransferase from Methanohalobium evestigatum (strain ATCC BAA-1072 / DSM 3721 / NBRC 107634 / OCM 161 / Z-7303).